The sequence spans 146 residues: Interleukin-13 (146 aa).

The N-terminal stretch at 1–24 is a signal peptide; the sequence is MHPLLNPLLLALGLMALLLTTVIA. 4 N-linked (GlcNAc...) asparagine glycosylation sites follow: Asn-52, Asn-63, Asn-71, and Asn-86. 2 cysteine pairs are disulfide-bonded: Cys-62/Cys-90 and Cys-78/Cys-104.

This sequence belongs to the IL-4/IL-13 family. Interacts with IL13RA2.

It is found in the secreted. Cytokine that plays important roles in allergic inflammation and immune response to parasite infection. Synergizes with IL2 in regulating interferon-gamma synthesis. Stimulates B-cell proliferation, and activation of eosinophils, basophils, and mast cells. Plays an important role in controlling IL33 activity by modulating the production of transmembrane and soluble forms of interleukin-1 receptor-like 1/IL1RL1. Displays the capacity to antagonize Th1-driven proinflammatory immune response and downregulates synthesis of many proinflammatory cytokines including IL1, IL6, IL10, IL12 and TNF-alpha through a mechanism that partially involves suppression of NF-kappa-B. Also functions on nonhematopoietic cells, including endothelial cells where it induces vascular cell adhesion protein 1/VCAM1, which is important in the recruitment of eosinophils. Exerts its biological effects through its receptors which comprises the IL4R chain and the IL13RA1 chain, to activate JAK1 and TYK2, leading to the activation of STAT6. Aside from IL13RA1, another receptor IL13RA2 acts as a high affinity decoy for IL13 and mediates internalization and depletion of extracellular IL13. The sequence is that of Interleukin-13 (IL13) from Homo sapiens (Human).